A 358-amino-acid polypeptide reads, in one-letter code: Putative glycylpeptide N-tetradecanoyltransferase (358 aa).

This sequence belongs to the NMT family.

The catalysed reaction is N-terminal glycyl-[protein] + tetradecanoyl-CoA = N-tetradecanoylglycyl-[protein] + CoA + H(+). In terms of biological role, adds a myristoyl group to the N-terminal glycine residue of certain proteins. The protein is Putative glycylpeptide N-tetradecanoyltransferase of Acanthamoeba polyphaga (Amoeba).